We begin with the raw amino-acid sequence, 361 residues long: Protein-glutamate methylesterase/protein-glutamine glutaminase 1 (361 aa).

The Response regulatory domain maps to K10–E127. D61 carries the post-translational modification 4-aspartylphosphate. The CheB-type methylesterase domain maps to F167–N359. Residues S179, H205, and D301 contribute to the active site.

This sequence belongs to the CheB family. Phosphorylated by CheA. Phosphorylation of the N-terminal regulatory domain activates the methylesterase activity.

Its subcellular location is the cytoplasm. It carries out the reaction [protein]-L-glutamate 5-O-methyl ester + H2O = L-glutamyl-[protein] + methanol + H(+). The enzyme catalyses L-glutaminyl-[protein] + H2O = L-glutamyl-[protein] + NH4(+). Involved in chemotaxis. Part of a chemotaxis signal transduction system that modulates chemotaxis in response to various stimuli. Catalyzes the demethylation of specific methylglutamate residues introduced into the chemoreceptors (methyl-accepting chemotaxis proteins or MCP) by CheR. Also mediates the irreversible deamidation of specific glutamine residues to glutamic acid. The sequence is that of Protein-glutamate methylesterase/protein-glutamine glutaminase 1 from Hahella chejuensis (strain KCTC 2396).